The primary structure comprises 476 residues: Protein transport protein Sec61 subunit alpha (476 aa).

Residues 2-33 (GIKFLEVIKPFCAVLPEIQKPERKIQFREKVL) are Cytoplasmic-facing. A helical membrane pass occupies residues 34–53 (WTAITLFIFLVCCQIPLFGI). Over 54–76 (MSSDSADPFYWMRVILASNRGTL) the chain is Lumenal. A helical transmembrane segment spans residues 77 to 96 (MELGISPIVTSDLIMQLLAG). The Cytoplasmic segment spans residues 97-117 (AKIIEVGDSPKDRALFNGAQK). Residues 118 to 138 (LFGMIITIGQAIVYVMTGMYG) traverse the membrane as a helical segment. Topologically, residues 139-144 (DPSEMG) are lumenal. A helical membrane pass occupies residues 145 to 165 (AGICLVIIIQLFVAGLIVLLL). The Cytoplasmic portion of the chain corresponds to 166 to 172 (DELLQKG). The helical transmembrane segment at 173-193 (YGLGSGISLLIATNICETIVW) threads the bilayer. Residues 194–240 (KAFSPTTVNTGRGTEFEGAIIALFHLLATRTDKVRALREAFYRQNLP) lie on the Lumenal side of the membrane. A helical membrane pass occupies residues 241–261 (NLMNLIATVFVFAVVIYFQGF). The Cytoplasmic segment spans residues 262–288 (RVDLPIKSARYRGQYNTYPIKLFYTSN). A helical transmembrane segment spans residues 289 to 309 (IPIILQSALVSNLYVISQMLS). Residues 310–354 (TRFSGNFIVNLLGTWSDTSTGGPARAYPVGGLCYFLSPPESFGSV) lie on the Lumenal side of the membrane. The chain crosses the membrane as a helical span at residues 355–375 (LDDPVHAAIYIVFMLGSCAFF). At 376–420 (SKTWIEVSGSSAKDVAKQLKEQQMVMRGHRETSMVHELNRYIPTA) the chain is on the cytoplasmic side. Residues 421-441 (AAFGGLCIGGLSVMADFLGAI) form a helical membrane-spanning segment. Residues 442–445 (GSGT) lie on the Lumenal side of the membrane. The chain crosses the membrane as a helical span at residues 446-462 (GILLAVTIIYQYFEIFV). At 463–476 (KEQSEMGSMGGLFF) the chain is on the cytoplasmic side.

The protein belongs to the SecY/SEC61-alpha family. As to quaternary structure, the SEC61 channel-forming translocon complex consists of channel-forming core components SEC61A1, SEC61B and SEC61G and different auxiliary components such as SEC62 and SEC63. The SEC61 channel associates with the multi-pass translocon (MPT) complex.

The protein resides in the endoplasmic reticulum membrane. In terms of biological role, component of SEC61 channel-forming translocon complex that mediates transport of signal peptide-containing precursor polypeptides across the endoplasmic reticulum (ER). Forms a ribosome receptor and a gated pore in the ER membrane, both functions required for cotranslational translocation of nascent polypeptides. May cooperate with auxiliary protein SEC62, SEC63 and HSPA5/BiP to enable post-translational transport of small presecretory proteins. The SEC61 channel is also involved in ER membrane insertion of transmembrane proteins: it mediates membrane insertion of the first few transmembrane segments of proteins, while insertion of subsequent transmembrane regions of multi-pass membrane proteins is mediated by the multi-pass translocon (MPT) complex. This Boreogadus saida (Polar cod) protein is Protein transport protein Sec61 subunit alpha (sec61a).